The chain runs to 106 residues: UPF0145 protein PputGB1_2909 (106 aa).

It belongs to the UPF0145 family.

The protein is UPF0145 protein PputGB1_2909 of Pseudomonas putida (strain GB-1).